Reading from the N-terminus, the 317-residue chain is Aspartate carbamoyltransferase catalytic subunit (317 aa).

2 residues coordinate carbamoyl phosphate: Arg-66 and Thr-67. L-aspartate is bound at residue Lys-94. Positions 116, 144, and 147 each coordinate carbamoyl phosphate. L-aspartate-binding residues include Arg-177 and Arg-231. Positions 272 and 273 each coordinate carbamoyl phosphate.

This sequence belongs to the aspartate/ornithine carbamoyltransferase superfamily. ATCase family. In terms of assembly, heterododecamer (2C3:3R2) of six catalytic PyrB chains organized as two trimers (C3), and six regulatory PyrI chains organized as three dimers (R2).

The enzyme catalyses carbamoyl phosphate + L-aspartate = N-carbamoyl-L-aspartate + phosphate + H(+). It participates in pyrimidine metabolism; UMP biosynthesis via de novo pathway; (S)-dihydroorotate from bicarbonate: step 2/3. Catalyzes the condensation of carbamoyl phosphate and aspartate to form carbamoyl aspartate and inorganic phosphate, the committed step in the de novo pyrimidine nucleotide biosynthesis pathway. The protein is Aspartate carbamoyltransferase catalytic subunit of Beijerinckia indica subsp. indica (strain ATCC 9039 / DSM 1715 / NCIMB 8712).